Reading from the N-terminus, the 396-residue chain is Probable 20S rRNA accumulation protein 4 (396 aa).

The protein belongs to the TSR4 family.

Its subcellular location is the cytoplasm. It localises to the nucleus. It is found in the nucleolus. In terms of biological role, required for processing of the 20S pre-rRNA at site D to generate mature 18S rRNA. This Schizosaccharomyces pombe (strain 972 / ATCC 24843) (Fission yeast) protein is Probable 20S rRNA accumulation protein 4.